The primary structure comprises 244 residues: Phosphoadenosine 5'-phosphosulfate reductase (244 aa).

C239 serves as the catalytic Nucleophile; cysteine thiosulfonate intermediate.

The protein belongs to the PAPS reductase family. CysH subfamily.

It is found in the cytoplasm. The enzyme catalyses [thioredoxin]-disulfide + sulfite + adenosine 3',5'-bisphosphate + 2 H(+) = [thioredoxin]-dithiol + 3'-phosphoadenylyl sulfate. Its pathway is sulfur metabolism; hydrogen sulfide biosynthesis; sulfite from sulfate: step 3/3. Its function is as follows. Catalyzes the formation of sulfite from phosphoadenosine 5'-phosphosulfate (PAPS) using thioredoxin as an electron donor. The chain is Phosphoadenosine 5'-phosphosulfate reductase from Escherichia coli O8 (strain IAI1).